The chain runs to 94 residues: MTKSELIERLAGQQSHVPAKVVEDAVKEMLEHMAGTLAEGERIEIRGFGSFSLHYRAPRVGRNPKTGDKVELEGKYVPHFKPGKELRDRANIYG.

It belongs to the bacterial histone-like protein family. In terms of assembly, heterodimer of an alpha and a beta chain.

Its function is as follows. This protein is one of the two subunits of integration host factor, a specific DNA-binding protein that functions in genetic recombination as well as in transcriptional and translational control. The protein is Integration host factor subunit beta of Yersinia pseudotuberculosis serotype O:1b (strain IP 31758).